The following is a 465-amino-acid chain: Innexin-11 (465 aa).

Transmembrane regions (helical) follow at residues 29 to 49 (LMTP…QFGG), 105 to 125 (QWVP…SYLW), 195 to 215 (SGFI…NVFA), and 286 to 306 (IFVL…VSLV). Residues 433-465 (ISTSLMPDKDDIESSSTSSEEDQKRVSNVITNI) form a disordered region.

This sequence belongs to the pannexin family.

Its subcellular location is the cell membrane. The protein localises to the cell junction. It is found in the gap junction. Its function is as follows. Structural component of the gap junctions. In Caenorhabditis elegans, this protein is Innexin-11 (inx-11).